A 224-amino-acid polypeptide reads, in one-letter code: Response regulator protein GraR (224 aa).

A Response regulatory domain is found at 2–115; it reads QILLVEDDNT…VLIAKLQAIY (114 aa). The residue at position 51 (aspartate 51) is a 4-aspartylphosphate. A DNA-binding region (ompR/PhoB-type) is located at residues 126-224; that stretch reads KRTLTWQDAV…KVGKGYMAHE (99 aa). Phosphothreonine is present on residues threonine 128, threonine 130, and threonine 149.

In terms of assembly, interacts with GraX. Post-translationally, phosphorylated by GraS. Phosphorylated by Stk1; phosphorylation increases the DNA-binding activity of GraR.

The protein resides in the cytoplasm. In terms of biological role, member of the two-component regulatory system GraR/GraS involved in resistance against cationic antimicrobial peptides (CAMPs). Upon phosphorylation by GraS, functions as a transcription regulator by direct binding to promoter regions of target genes such as adhesins, exoproteins, transporters, toxins, and proteins involved in cell wall synthesis. Down-regulates the expression of many genes involved in RNA and amino acid synthesis or glycolysis. The protein is Response regulator protein GraR (graR) of Staphylococcus aureus (strain MRSA252).